Here is a 126-residue protein sequence, read N- to C-terminus: uncharacterized protein (126 aa).

Residues 1–101 (MQASSEPANV…KSVGSQSADE (101 aa)) form a disordered region. Polar residues-rich tracts occupy residues 14–27 (GQNQ…STSP) and 86–99 (DTEA…SQSA).

This is an uncharacterized protein from Schizosaccharomyces pombe (strain 972 / ATCC 24843) (Fission yeast).